Here is a 325-residue protein sequence, read N- to C-terminus: UPF0164 protein TP_0856 (325 aa).

Positions 1 to 28 are cleaved as a signal peptide; that stretch reads MVHYKSVFYKSAALVCGFVLAGASVAIA.

This sequence belongs to the UPF0164 family.

The sequence is that of UPF0164 protein TP_0856 from Treponema pallidum (strain Nichols).